A 542-amino-acid polypeptide reads, in one-letter code: MARYVFITGGVVSSLGKGIAAAALAALLQARGYRVRIRKLDPYLNVDPGTMSPYQHGEVFVTDDGAETDLDLGHYERFTGRPANQQDNITTGRIYRNIIEKERRGDYLGATVQVIPHVTDEIKNFVLEGNEDYDFVLCEIGGTVGDIEAMPFLEAIRQLGNELPRGTAVYIHLTLMPYIPAAGELKTKPTQHSVKELRSIGIAPDILLVRADREIPESDRRKLSLFCNVRESAVIQALDVATIYDVPIAYHKEGLDSEVLSAFGIDPAPKPRMDRWEEVSHRLHNPEGEVTIAVVGKYTGLKDAYKSLIEALHHGGLANKVKVNLDWIEAEVFESEDPAPYLEKVHGILVPGGFGERGAEGKILAAKFARERKVPYFGICFGMQMACIEAARNLVGIEDASSSEFGPTREPVVGLMTEWLKGNMLEKRAAAGDLGGTMRLGAYEAVLKPDSKIAQIYGSTDIHERHRHRYEVNIDYKDRLEAAGLNFAGMSPDGVLPETVEYADHPWFIGVQYHPELKSRPFEPHPLFASFIEAAIEQSRLV.

Positions 1–265 (MARYVFITGG…DSEVLSAFGI (265 aa)) are amidoligase domain. S13 is a CTP binding site. S13 serves as a coordination point for UTP. Residue 14 to 19 (SLGKGI) participates in ATP binding. Y54 contributes to the L-glutamine binding site. Position 71 (D71) interacts with ATP. Positions 71 and 139 each coordinate Mg(2+). Residues 146 to 148 (DIE), 186 to 191 (KTKPTQ), and K222 each bind CTP. Residues 186-191 (KTKPTQ) and K222 each bind UTP. Residues 291–541 (TIAVVGKYTG…IEAAIEQSRL (251 aa)) enclose the Glutamine amidotransferase type-1 domain. G353 serves as a coordination point for L-glutamine. Catalysis depends on C380, which acts as the Nucleophile; for glutamine hydrolysis. L-glutamine-binding positions include 381-384 (FGMQ), E404, and R469. Residues H514 and E516 contribute to the active site.

The protein belongs to the CTP synthase family. In terms of assembly, homotetramer.

The enzyme catalyses UTP + L-glutamine + ATP + H2O = CTP + L-glutamate + ADP + phosphate + 2 H(+). It catalyses the reaction L-glutamine + H2O = L-glutamate + NH4(+). It carries out the reaction UTP + NH4(+) + ATP = CTP + ADP + phosphate + 2 H(+). It participates in pyrimidine metabolism; CTP biosynthesis via de novo pathway; CTP from UDP: step 2/2. With respect to regulation, allosterically activated by GTP, when glutamine is the substrate; GTP has no effect on the reaction when ammonia is the substrate. The allosteric effector GTP functions by stabilizing the protein conformation that binds the tetrahedral intermediate(s) formed during glutamine hydrolysis. Inhibited by the product CTP, via allosteric rather than competitive inhibition. In terms of biological role, catalyzes the ATP-dependent amination of UTP to CTP with either L-glutamine or ammonia as the source of nitrogen. Regulates intracellular CTP levels through interactions with the four ribonucleotide triphosphates. This is CTP synthase from Brucella abortus (strain 2308).